Consider the following 279-residue polypeptide: 1-(5-phosphoribosyl)-5-[(5-phosphoribosylamino)methylideneamino] imidazole-4-carboxamide isomerase (279 aa).

Belongs to the HisA/HisF family.

The protein resides in the cytoplasm. It catalyses the reaction 1-(5-phospho-beta-D-ribosyl)-5-[(5-phospho-beta-D-ribosylamino)methylideneamino]imidazole-4-carboxamide = 5-[(5-phospho-1-deoxy-D-ribulos-1-ylimino)methylamino]-1-(5-phospho-beta-D-ribosyl)imidazole-4-carboxamide. It participates in amino-acid biosynthesis; L-histidine biosynthesis; L-histidine from 5-phospho-alpha-D-ribose 1-diphosphate: step 4/9. The protein is 1-(5-phosphoribosyl)-5-[(5-phosphoribosylamino)methylideneamino] imidazole-4-carboxamide isomerase (HIS6) of Candida albicans (Yeast).